A 209-amino-acid chain; its full sequence is Orotate phosphoribosyltransferase (209 aa).

5-phospho-alpha-D-ribose 1-diphosphate contacts are provided by residues Arg-96, Lys-100, His-102, and 122–130; that span reads EDLISTGGS. Residue Ser-126 coordinates orotate.

It belongs to the purine/pyrimidine phosphoribosyltransferase family. PyrE subfamily. Homodimer. Mg(2+) serves as cofactor.

It catalyses the reaction orotidine 5'-phosphate + diphosphate = orotate + 5-phospho-alpha-D-ribose 1-diphosphate. It participates in pyrimidine metabolism; UMP biosynthesis via de novo pathway; UMP from orotate: step 1/2. Catalyzes the transfer of a ribosyl phosphate group from 5-phosphoribose 1-diphosphate to orotate, leading to the formation of orotidine monophosphate (OMP). The polypeptide is Orotate phosphoribosyltransferase (Streptococcus pyogenes serotype M12 (strain MGAS2096)).